A 159-amino-acid chain; its full sequence is 2-C-methyl-D-erythritol 2,4-cyclodiphosphate synthase (159 aa).

The a divalent metal cation site is built by Asp8 and His10. Residues 8 to 10 (DVH) and 34 to 35 (HS) contribute to the 4-CDP-2-C-methyl-D-erythritol 2-phosphate site. His42 provides a ligand contact to a divalent metal cation. Residues 56-58 (DIG), 61-65 (FPDTD), 100-106 (AQAPKML), 132-135 (TTTE), Phe139, and Arg142 contribute to the 4-CDP-2-C-methyl-D-erythritol 2-phosphate site.

Belongs to the IspF family. In terms of assembly, homotrimer. Requires a divalent metal cation as cofactor.

The catalysed reaction is 4-CDP-2-C-methyl-D-erythritol 2-phosphate = 2-C-methyl-D-erythritol 2,4-cyclic diphosphate + CMP. The protein operates within isoprenoid biosynthesis; isopentenyl diphosphate biosynthesis via DXP pathway; isopentenyl diphosphate from 1-deoxy-D-xylulose 5-phosphate: step 4/6. Involved in the biosynthesis of isopentenyl diphosphate (IPP) and dimethylallyl diphosphate (DMAPP), two major building blocks of isoprenoid compounds. Catalyzes the conversion of 4-diphosphocytidyl-2-C-methyl-D-erythritol 2-phosphate (CDP-ME2P) to 2-C-methyl-D-erythritol 2,4-cyclodiphosphate (ME-CPP) with a corresponding release of cytidine 5-monophosphate (CMP). In Salmonella typhi, this protein is 2-C-methyl-D-erythritol 2,4-cyclodiphosphate synthase.